Consider the following 107-residue polypeptide: Phosphoribosyl-ATP pyrophosphatase (107 aa).

The protein belongs to the PRA-PH family.

It is found in the cytoplasm. The enzyme catalyses 1-(5-phospho-beta-D-ribosyl)-ATP + H2O = 1-(5-phospho-beta-D-ribosyl)-5'-AMP + diphosphate + H(+). It participates in amino-acid biosynthesis; L-histidine biosynthesis; L-histidine from 5-phospho-alpha-D-ribose 1-diphosphate: step 2/9. In Bacillus cereus (strain G9842), this protein is Phosphoribosyl-ATP pyrophosphatase.